Reading from the N-terminus, the 410-residue chain is Cysteine desulfurase IscS (410 aa).

Pyridoxal 5'-phosphate-binding positions include 80–81 (AT), Asn-160, Gln-188, and 208–210 (SGH). The residue at position 211 (Lys-211) is an N6-(pyridoxal phosphate)lysine. Thr-248 contacts pyridoxal 5'-phosphate. The Cysteine persulfide intermediate role is filled by Cys-334. Cys-334 serves as a coordination point for [2Fe-2S] cluster.

It belongs to the class-V pyridoxal-phosphate-dependent aminotransferase family. NifS/IscS subfamily. As to quaternary structure, homodimer. Forms a heterotetramer with IscU, interacts with other sulfur acceptors. Pyridoxal 5'-phosphate is required as a cofactor.

It localises to the cytoplasm. It carries out the reaction (sulfur carrier)-H + L-cysteine = (sulfur carrier)-SH + L-alanine. It participates in cofactor biosynthesis; iron-sulfur cluster biosynthesis. Its function is as follows. Master enzyme that delivers sulfur to a number of partners involved in Fe-S cluster assembly, tRNA modification or cofactor biosynthesis. Catalyzes the removal of elemental sulfur atoms from cysteine to produce alanine. Functions as a sulfur delivery protein for Fe-S cluster synthesis onto IscU, an Fe-S scaffold assembly protein, as well as other S acceptor proteins. The chain is Cysteine desulfurase IscS from Rickettsia rickettsii (strain Iowa).